The following is an 884-amino-acid chain: Cadherin-1 (884 aa).

The N-terminal stretch at 1-23 is a signal peptide; that stretch reads MGARCRSFSALLLLLQVSSWLCQ. The propeptide occupies 24 to 156; sequence ELEPESCSPG…VYPGLRRQKR (133 aa). Residues 119–139 are disordered; it reads KSMGHHHHRHHHRDPASESNP. Over residues 121–131 the composition is skewed to basic residues; the sequence is MGHHHHRHHHR. 5 consecutive Cadherin domains span residues 157-264, 265-377, 378-488, 489-595, and 596-699; these read DWVI…RPEF, TQEV…APVF, NPST…APIF, MPAE…DNAP, and IPEP…NCMK. Residues 157-709 lie on the Extracellular side of the membrane; that stretch reads DWVIPPISCP…AGIVAAGLQV (553 aa). Asp259 provides a ligand contact to Ca(2+). O-linked (Man...) serine glycosylation is found at Ser282 and Ser287. Ca(2+) is bound at residue Asp290. O-linked (Man...) threonine glycosylation is found at Thr360, Thr472, Thr474, and Thr511. An N-linked (GlcNAc...) asparagine glycan is attached at Asn560. 3 O-linked (Man...) threonine glycosylation sites follow: Thr578, Thr580, and Thr582. The N-linked (GlcNAc...) asparagine glycan is linked to Asn639. The chain crosses the membrane as a helical span at residues 710-733; it reads PAILGILGGILALLILILLLLLFL. Over 734–884 the chain is Cytoplasmic; the sequence is RRRTVVKEPL…ADMYGGGEDD (151 aa). The interval 749 to 808 is disordered; sequence DTRDNVYYYDEEGGGEEDQDFDLSQLHRGLDARPEVTRNDVAPTLMSVPQYRPRPANPDE. Phosphotyrosine; by SRC occurs at positions 755, 756, and 757. Acidic residues predominate over residues 757 to 769; the sequence is YDEEGGGEEDQDF. Residues 760-771 are required for binding CTNND1 and PSEN1; that stretch reads EGGGEEDQDFDL. Ser772 carries the phosphoserine modification. Positions 776-786 are enriched in basic and acidic residues; that stretch reads RGLDARPEVTR. A phosphoserine mark is found at Ser795, Ser840, Ser842, and Ser848. Residues 813–884 form a required for binding alpha, beta and gamma catenins region; sequence IDENLKAADS…ADMYGGGEDD (72 aa).

As to quaternary structure, homodimer; disulfide-linked. Component of an E-cadherin/ catenin adhesion complex composed of at least E-cadherin/CDH1, beta-catenin/CTNNB1 or gamma-catenin/JUP, and potentially alpha-catenin/CTNNA1; the complex is located to adherens junctions. Found in a complex composed of CDH1, RAP1A and PKP3; PKP3 acts as a scaffold protein within the complex, the complex is required for CDH1 localization to mature desmosome cell junctions. Interacts with the TRPV4 and CTNNB1 complex. Interacts with CTNND1. The stable association of CTNNA1 is controversial as CTNNA1 was shown not to bind to F-actin when assembled in the complex. Alternatively, the CTNNA1-containing complex may be linked to F-actin by other proteins such as LIMA1. Interaction with PSEN1, cleaves CDH1 resulting in the disassociation of cadherin-based adherens junctions (CAJs). Interacts with AJAP1 and DLGAP5. Interacts with TBC1D2. Interacts with LIMA1. Interacts with CAV1. Interacts with PIP5K1C. Interacts with RAB8B. Interacts with DDR1; this stabilizes CDH1 at the cell surface and inhibits its internalization. Interacts with RAPGEF2. Interacts with KLRG1. Forms a ternary complex composed of ADAM10, CADH1 and EPHA4; within the complex, CADH1 is cleaved by ADAM10 which disrupts adherens junctions. Interacts with SPEF1. Interacts with CTNNB1 and PKP2. Interacts with AMOTL2; the interaction may facilitate binding of radial actin fibers to cell junction complexes. Interacts with DSG3; the interaction is required for CDH1 localization to developing adherens junctions. Post-translationally, during apoptosis or with calcium influx, cleaved by a membrane-bound metalloproteinase (ADAM10), PS1/gamma-secretase and caspase-3. Processing by the metalloproteinase, induced by calcium influx, causes disruption of cell-cell adhesion and the subsequent release of beta-catenin into the cytoplasm. The residual membrane-tethered cleavage product is rapidly degraded via an intracellular proteolytic pathway. Cleavage by caspase-3 releases the cytoplasmic tail resulting in disintegration of the actin microfilament system. The gamma-secretase-mediated cleavage promotes disassembly of adherens junctions. During development of the cochlear organ of Corti, cleavage by ADAM10 at adherens junctions promotes pillar cell separation. In terms of processing, O-glycosylated. O-manosylated by TMTC1, TMTC2, TMTC3 or TMTC4. Ser-287 and Thr-511 are O-manosylated by TMTC2 or TMTC4 but not TMTC1 or TMTC3. N-glycosylation at Asn-639 is essential for expression, folding and trafficking. Addition of bisecting N-acetylglucosamine by MGAT3 modulates its cell membrane location. Post-translationally, ubiquitinated by a SCF complex containing SKP2, which requires prior phosphorylation by CK1/CSNK1A1. Ubiquitinated by CBLL1/HAKAI, requires prior phosphorylation at Tyr-756. Expressed in inner and outer pillar cells of the organ of Corti (at protein level). Expressed in granuloma macrophages (at protein level). Expressed in the epidermal keratinocytes of the skin from birth (at protein level). Expressed in non-neural epithelial tissues.

It is found in the cell junction. The protein localises to the adherens junction. The protein resides in the cell membrane. Its subcellular location is the endosome. It localises to the golgi apparatus. It is found in the trans-Golgi network. The protein localises to the cytoplasm. The protein resides in the desmosome. Its function is as follows. Cadherins are calcium-dependent cell adhesion proteins. They preferentially interact with themselves in a homophilic manner in connecting cells; cadherins may thus contribute to the sorting of heterogeneous cell types. CDH1 is involved in mechanisms regulating cell-cell adhesions, mobility and proliferation of epithelial cells. Promotes organization of radial actin fiber structure and cellular response to contractile forces, via its interaction with AMOTL2 which facilitates anchoring of radial actin fibers to CDH1 junction complexes at the cell membrane. Plays a role in the early stages of desmosome cell-cell junction formation via facilitating the recruitment of DSG2 and DSP to desmosome plaques. Has a potent invasive suppressor role. It is a ligand for integrin alpha-E/beta-7. In terms of biological role, E-Cad/CTF2 promotes non-amyloidogenic degradation of Abeta precursors. Has a strong inhibitory effect on APP C99 and C83 production. (Microbial infection) Does not function as a receptor for L.monocytogenes internalin A (InlA); mutating a single surface-exposed residue confers receptor activity to this protein and promotes uptake of the bacteria. The protein is Cadherin-1 (Cdh1) of Mus musculus (Mouse).